The following is a 101-amino-acid chain: Small ribosomal subunit protein uS14 (101 aa).

The protein belongs to the universal ribosomal protein uS14 family. In terms of assembly, part of the 30S ribosomal subunit. Contacts proteins S3 and S10.

In terms of biological role, binds 16S rRNA, required for the assembly of 30S particles and may also be responsible for determining the conformation of the 16S rRNA at the A site. The protein is Small ribosomal subunit protein uS14 of Pasteurella multocida (strain Pm70).